A 321-amino-acid chain; its full sequence is Cathepsin O (321 aa).

A signal peptide spans 1 to 23; sequence MDVRALPWLPWLLWLLCRGGGDA. Residues 24–107 constitute a propeptide, activation peptide; it reads DSRAPFTPTW…EVHMSIPNVS (84 aa). Asn62 and Asn105 each carry an N-linked (GlcNAc...) asparagine glycan. 3 cysteine pairs are disulfide-bonded: Cys129–Cys170, Cys163–Cys204, and Cys262–Cys310. Residue Cys132 is part of the active site. Catalysis depends on residues His269 and Asn289.

The protein belongs to the peptidase C1 family. As to expression, expressed in all tissues examined. High levels seen in the ovary, kidney and placenta while low levels seen in thymus and skeletal muscle.

It localises to the lysosome. The catalysed reaction is The recombinant human enzyme hydrolyzes synthetic endopeptidase substrates including Z-Phe-Arg-NHMec and Z-Arg-Arg-NHMec.. Proteolytic enzyme possibly involved in normal cellular protein degradation and turnover. This is Cathepsin O (CTSO) from Homo sapiens (Human).